Consider the following 379-residue polypeptide: Cytochrome bd-I ubiquinol oxidase subunit 2 (379 aa).

Met1 is subject to N-formylmethionine. Residues 1 to 8 (MIDYEVLR) are Cytoplasmic-facing. A helical membrane pass occupies residues 9–28 (FIWWLLVGVLLIGFAVTDGF). The Periplasmic segment spans residues 29–79 (DMGVGMLTRFLGRNDTERRIMINSIAPHWDGNQVWLITAGGALFAAWPMVY). Residues 80–99 (AAAFSGFYVAMILVLASLFF) form a helical membrane-spanning segment. The Cytoplasmic portion of the chain corresponds to 100 to 122 (RPVGFDYRSKIEETRWRNMWDWG). Residues 123-142 (IFIGSFVPPLVIGVAFGNLL) traverse the membrane as a helical segment. At 143-164 (QGVPFNVDEYLRLYYTGNFFQL) the chain is on the periplasmic side. A helical membrane pass occupies residues 165–184 (LNPFGLLAGVVSVGMIITQG). Topologically, residues 185–205 (ATYLQMRTVGELHLRTRATAQ) are cytoplasmic. A helical transmembrane segment spans residues 206-225 (VAALVTLVCFALAGVWVMYG). At 226–262 (IDGYVVKSTMDHYAASNPLNKEVVREAGAWLVNFNNT) the chain is on the periplasmic side. The chain crosses the membrane as a helical span at residues 263-282 (PILWAIPALGVVLPLLTILT). Over 283-292 (ARMDKAAWAF) the chain is Cytoplasmic. A helical transmembrane segment spans residues 293–312 (VFSSLTLACIILTAGIAMFP). Topologically, residues 313–336 (FVMPSSTMMNASLTMWDATSSQLT) are periplasmic. Residues 337–356 (LNVMTWVAVVLVPIILLYTA) form a helical membrane-spanning segment. Residues 357 to 379 (WCYWKMFGRITKEDIERNTHSLY) are Cytoplasmic-facing.

Belongs to the cytochrome ubiquinol oxidase subunit 2 family. Heterodimer of subunits I and II. It depends on heme b as a cofactor. Heme d cis-diol serves as cofactor.

The protein localises to the cell inner membrane. The catalysed reaction is 2 a ubiquinol + O2(in) + 4 H(+)(in) = 2 a ubiquinone + 2 H2O(in) + 4 H(+)(out). The protein operates within energy metabolism; oxidative phosphorylation. In terms of biological role, a terminal oxidase that produces a proton motive force by the vectorial transfer of protons across the inner membrane. It is the component of the aerobic respiratory chain of E.coli that predominates when cells are grown at low aeration. Generates a proton motive force using protons and electrons from opposite sides of the membrane to generate H(2)O, transferring 1 proton/electron. The chain is Cytochrome bd-I ubiquinol oxidase subunit 2 (cydB) from Escherichia coli O157:H7.